The sequence spans 76 residues: Large ribosomal subunit protein bL28 (76 aa).

Residues 21–42 (RGKAKKEGGVGKHITKTSRRRQ) are disordered. The span at 33–42 (HITKTSRRRQ) shows a compositional bias: basic residues.

This sequence belongs to the bacterial ribosomal protein bL28 family.

The sequence is that of Large ribosomal subunit protein bL28 from Halothermothrix orenii (strain H 168 / OCM 544 / DSM 9562).